The sequence spans 120 residues: NAD(P)H-quinone oxidoreductase subunit 3, chloroplastic (120 aa).

Helical transmembrane passes span 9–29, 64–84, and 88–108; these read IFWV…LISG, MFAL…PWAM, and VLGV…IVGL.

This sequence belongs to the complex I subunit 3 family. As to quaternary structure, NDH is composed of at least 16 different subunits, 5 of which are encoded in the nucleus.

The protein localises to the plastid. It localises to the chloroplast thylakoid membrane. The catalysed reaction is a plastoquinone + NADH + (n+1) H(+)(in) = a plastoquinol + NAD(+) + n H(+)(out). The enzyme catalyses a plastoquinone + NADPH + (n+1) H(+)(in) = a plastoquinol + NADP(+) + n H(+)(out). Functionally, NDH shuttles electrons from NAD(P)H:plastoquinone, via FMN and iron-sulfur (Fe-S) centers, to quinones in the photosynthetic chain and possibly in a chloroplast respiratory chain. The immediate electron acceptor for the enzyme in this species is believed to be plastoquinone. Couples the redox reaction to proton translocation, and thus conserves the redox energy in a proton gradient. This Cucumis sativus (Cucumber) protein is NAD(P)H-quinone oxidoreductase subunit 3, chloroplastic.